A 408-amino-acid polypeptide reads, in one-letter code: 3-phosphoshikimate 1-carboxyvinyltransferase (408 aa).

3-phosphoshikimate-binding residues include Lys-10, Ser-11, and Arg-15. Residue Lys-10 participates in phosphoenolpyruvate binding. Phosphoenolpyruvate is bound by residues Gly-79 and Arg-107. Residues Ser-150, Ser-151, Gln-152, Ser-179, Glu-297, and His-324 each contribute to the 3-phosphoshikimate site. Gln-152 is a binding site for phosphoenolpyruvate. Glu-297 functions as the Proton acceptor in the catalytic mechanism. Arg-328, Arg-369, and Lys-394 together coordinate phosphoenolpyruvate.

Belongs to the EPSP synthase family. As to quaternary structure, monomer.

The protein localises to the cytoplasm. The catalysed reaction is 3-phosphoshikimate + phosphoenolpyruvate = 5-O-(1-carboxyvinyl)-3-phosphoshikimate + phosphate. The protein operates within metabolic intermediate biosynthesis; chorismate biosynthesis; chorismate from D-erythrose 4-phosphate and phosphoenolpyruvate: step 6/7. Catalyzes the transfer of the enolpyruvyl moiety of phosphoenolpyruvate (PEP) to the 5-hydroxyl of shikimate-3-phosphate (S3P) to produce enolpyruvyl shikimate-3-phosphate and inorganic phosphate. The polypeptide is 3-phosphoshikimate 1-carboxyvinyltransferase (Corynebacterium efficiens (strain DSM 44549 / YS-314 / AJ 12310 / JCM 11189 / NBRC 100395)).